The chain runs to 215 residues: ATP-dependent Clp protease proteolytic subunit 1 (215 aa).

Ser-111 (nucleophile) is an active-site residue. Residue His-136 is part of the active site.

The protein belongs to the peptidase S14 family. Fourteen ClpP subunits assemble into 2 heptameric rings which stack back to back to give a disk-like structure with a central cavity, resembling the structure of eukaryotic proteasomes.

It localises to the cytoplasm. The catalysed reaction is Hydrolysis of proteins to small peptides in the presence of ATP and magnesium. alpha-casein is the usual test substrate. In the absence of ATP, only oligopeptides shorter than five residues are hydrolyzed (such as succinyl-Leu-Tyr-|-NHMec, and Leu-Tyr-Leu-|-Tyr-Trp, in which cleavage of the -Tyr-|-Leu- and -Tyr-|-Trp bonds also occurs).. Cleaves peptides in various proteins in a process that requires ATP hydrolysis. Has a chymotrypsin-like activity. Plays a major role in the degradation of misfolded proteins. This is ATP-dependent Clp protease proteolytic subunit 1 from Gluconobacter oxydans (strain 621H) (Gluconobacter suboxydans).